The sequence spans 190 residues: Threonylcarbamoyl-AMP synthase (190 aa).

A YrdC-like domain is found at 9–190 (FLQLALARQT…IDIVTGQQFR (182 aa)).

The protein belongs to the SUA5 family. TsaC subfamily.

It is found in the cytoplasm. It catalyses the reaction L-threonine + hydrogencarbonate + ATP = L-threonylcarbamoyladenylate + diphosphate + H2O. Its function is as follows. Required for the formation of a threonylcarbamoyl group on adenosine at position 37 (t(6)A37) in tRNAs that read codons beginning with adenine. Catalyzes the conversion of L-threonine, HCO(3)(-)/CO(2) and ATP to give threonylcarbamoyl-AMP (TC-AMP) as the acyladenylate intermediate, with the release of diphosphate. This chain is Threonylcarbamoyl-AMP synthase, found in Marinobacter nauticus (strain ATCC 700491 / DSM 11845 / VT8) (Marinobacter aquaeolei).